The chain runs to 94 residues: Small ribosomal subunit protein uS19 (94 aa).

Belongs to the universal ribosomal protein uS19 family.

Functionally, protein S19 forms a complex with S13 that binds strongly to the 16S ribosomal RNA. The sequence is that of Small ribosomal subunit protein uS19 from Desulforamulus reducens (strain ATCC BAA-1160 / DSM 100696 / MI-1) (Desulfotomaculum reducens).